A 359-amino-acid polypeptide reads, in one-letter code: UDP-3-O-acylglucosamine N-acyltransferase (359 aa).

H256 serves as the catalytic Proton acceptor.

Belongs to the transferase hexapeptide repeat family. LpxD subfamily. As to quaternary structure, homotrimer.

It catalyses the reaction a UDP-3-O-[(3R)-3-hydroxyacyl]-alpha-D-glucosamine + a (3R)-hydroxyacyl-[ACP] = a UDP-2-N,3-O-bis[(3R)-3-hydroxyacyl]-alpha-D-glucosamine + holo-[ACP] + H(+). Its pathway is bacterial outer membrane biogenesis; LPS lipid A biosynthesis. Catalyzes the N-acylation of UDP-3-O-acylglucosamine using 3-hydroxyacyl-ACP as the acyl donor. Is involved in the biosynthesis of lipid A, a phosphorylated glycolipid that anchors the lipopolysaccharide to the outer membrane of the cell. The chain is UDP-3-O-acylglucosamine N-acyltransferase from Rhodopseudomonas palustris (strain BisB5).